The chain runs to 447 residues: Ribosomal protein uS12 methylthiotransferase RimO (447 aa).

Residues 10–120 (PKVGFVSLGC…VVNAVHDVVP (111 aa)) enclose the MTTase N-terminal domain. Residues cysteine 19, cysteine 55, cysteine 84, cysteine 153, cysteine 157, and cysteine 160 each coordinate [4Fe-4S] cluster. Positions 139–377 (LTPRHYAYLK…MAHQQAISAA (239 aa)) constitute a Radical SAM core domain. Positions 380–447 (QMKIGKEIEV…DEYDLWAEML (68 aa)) constitute a TRAM domain.

This sequence belongs to the methylthiotransferase family. RimO subfamily. The cofactor is [4Fe-4S] cluster.

The protein resides in the cytoplasm. It carries out the reaction L-aspartate(89)-[ribosomal protein uS12]-hydrogen + (sulfur carrier)-SH + AH2 + 2 S-adenosyl-L-methionine = 3-methylsulfanyl-L-aspartate(89)-[ribosomal protein uS12]-hydrogen + (sulfur carrier)-H + 5'-deoxyadenosine + L-methionine + A + S-adenosyl-L-homocysteine + 2 H(+). Its function is as follows. Catalyzes the methylthiolation of an aspartic acid residue of ribosomal protein uS12. This chain is Ribosomal protein uS12 methylthiotransferase RimO, found in Pseudomonas syringae pv. syringae (strain B728a).